Reading from the N-terminus, the 259-residue chain is Deoxyribose-phosphate aldolase (259 aa).

Residue Asp102 is the Proton donor/acceptor of the active site. Lys167 serves as the catalytic Schiff-base intermediate with acetaldehyde. The Proton donor/acceptor role is filled by Lys201.

The protein belongs to the DeoC/FbaB aldolase family. DeoC type 2 subfamily.

It localises to the cytoplasm. It carries out the reaction 2-deoxy-D-ribose 5-phosphate = D-glyceraldehyde 3-phosphate + acetaldehyde. The protein operates within carbohydrate degradation; 2-deoxy-D-ribose 1-phosphate degradation; D-glyceraldehyde 3-phosphate and acetaldehyde from 2-deoxy-alpha-D-ribose 1-phosphate: step 2/2. Catalyzes a reversible aldol reaction between acetaldehyde and D-glyceraldehyde 3-phosphate to generate 2-deoxy-D-ribose 5-phosphate. The sequence is that of Deoxyribose-phosphate aldolase from Escherichia coli O8 (strain IAI1).